The primary structure comprises 393 residues: Probable protein phosphatase 2C 68 (393 aa).

The 304-residue stretch at 56-359 (DFSIAVVQAN…DDITVVVIFI (304 aa)) folds into the PPM-type phosphatase domain. Mn(2+) contacts are provided by Asp87, Gly88, Asp291, and Asp350.

Belongs to the PP2C family. It depends on Mg(2+) as a cofactor. Mn(2+) serves as cofactor.

The catalysed reaction is O-phospho-L-seryl-[protein] + H2O = L-seryl-[protein] + phosphate. It carries out the reaction O-phospho-L-threonyl-[protein] + H2O = L-threonyl-[protein] + phosphate. Functionally, may dephosphorylate and repress plasma membrane H(+)-ATPases (PM H(+)-ATPases, e.g. AHA1 and AHA2), thus influencing negatively plant growth and fitness. The sequence is that of Probable protein phosphatase 2C 68 from Arabidopsis thaliana (Mouse-ear cress).